Reading from the N-terminus, the 666-residue chain is MATPNGLARIETTGKKKQDNGVWYDDSSAPVRAQTIDELHSLQRKRSAPTTPNRSAPTTPIKGGAHSPFAVAISEEERHTQQMQSISASLASLTRETGPKVVKGDPAAKGEAAAQGAPSTPRAHQQHRHPAAPAIAVSDSSLKFTHVLNNLSPAELYEQAIKYEKGSFITSTGALATLSGAKTGRSPRDKRVVKDEVTAQDLWWGKGSPNIEMDEKTFLINRERAVDYLNSLKVVRQRQLLNWDPENRIKVRIISARAYHSLFMHNMCIRPTDEELEDFGTPDFTIYNAGQFPCNRYTHYMTSSTSIDLNLARREMVIMGTQYAGEMKKGLFGVMHYLMPKRGILSLHSGCNMGKDGDVALFFGLSGTGKTTLSTDHNGLLIGDDEHCWSDNGVSNIEGGCYAKCIDLAQEKEPDIWNAIKFGTVLENVVFDEHTREVDYADYSVTENTRAAYPIEYIPIAKIPCVGPHPKNVILLACDAFGVLPPVSKLILAQTMYHFISGYTALVAGTEDGIKEPQATFSACFGAAFIMLHPTKYAAMLAEKMQKYGATGWLVNTGWSGGRYGVGKRIRLPYTRKIIDAIHSGELLTANYQKTEVFGLEIPTEINGVPSEILDPIYTWTDKAAYKENLLRLGGLFKNNFEVFASYKIGDDSSLTDEILAAGPNF.

2 disordered regions span residues 1–68 (MATP…AHSP) and 91–132 (ASLT…HPAA). A compositionally biased stretch (polar residues) spans 48–58 (APTTPNRSAPT). Over residues 109 to 123 (KGEAAAQGAPSTPRA) the composition is skewed to low complexity. Residue 364-371 (GLSGTGKT) participates in ATP binding.

This sequence belongs to the phosphoenolpyruvate carboxykinase (ATP) family.

It is found in the cytoplasm. The enzyme catalyses oxaloacetate + ATP = phosphoenolpyruvate + ADP + CO2. Its pathway is carbohydrate biosynthesis; gluconeogenesis. The protein is Phosphoenolpyruvate carboxykinase (ATP) of Zea mays (Maize).